The following is a 505-amino-acid chain: ATP synthase subunit beta (505 aa).

Gly158–Thr165 provides a ligand contact to ATP.

This sequence belongs to the ATPase alpha/beta chains family. As to quaternary structure, F-type ATPases have 2 components, CF(1) - the catalytic core - and CF(0) - the membrane proton channel. CF(1) has five subunits: alpha(3), beta(3), gamma(1), delta(1), epsilon(1). CF(0) has three main subunits: a(1), b(2) and c(9-12). The alpha and beta chains form an alternating ring which encloses part of the gamma chain. CF(1) is attached to CF(0) by a central stalk formed by the gamma and epsilon chains, while a peripheral stalk is formed by the delta and b chains.

It localises to the cell inner membrane. The enzyme catalyses ATP + H2O + 4 H(+)(in) = ADP + phosphate + 5 H(+)(out). Its function is as follows. Produces ATP from ADP in the presence of a proton gradient across the membrane. The catalytic sites are hosted primarily by the beta subunits. In Parabacteroides distasonis (strain ATCC 8503 / DSM 20701 / CIP 104284 / JCM 5825 / NCTC 11152), this protein is ATP synthase subunit beta.